The sequence spans 467 residues: Ammonium transporter Rh type C (467 aa).

Topologically, residues 1 to 3 (MRL) are cytoplasmic. A helical membrane pass occupies residues 4 to 24 (RLPVVCFLWEIAMIVLFGIFV). The Extracellular segment spans residues 25 to 55 (RYNDEADPHWSEFMKAQNITSDIQNDYYFRY). N42 carries an N-linked (GlcNAc...) asparagine glycan. Residues 56 to 76 (PSFQDVHVMIFVGFGFLMTFL) form a helical membrane-spanning segment. The Cytoplasmic portion of the chain corresponds to 77 to 80 (KRYG). The helical transmembrane segment at 81–101 (FGSVAFNFLLAAFGIQWAILM) threads the bilayer. The Extracellular portion of the chain corresponds to 102 to 119 (QGWFHTFKNGKILIGVES). A helical membrane pass occupies residues 120–139 (LINADFCVGSVCIAFGAILG). Over 140-145 (KVSPVQ) the chain is Cytoplasmic. The chain crosses the membrane as a helical span at residues 146-168 (IMVMTLFQVTLFAVNEWILLNLL). Topologically, residues 169-173 (HVNDA) are extracellular. A helical transmembrane segment spans residues 174–194 (GGSMTIHTFGAYFGLTVAWIL). Residues 195–213 (NRPRLKQTNDKEGSVYVSD) lie on the Cytoplasmic side of the membrane. Residues 214-234 (LFSMIGTLFLWMFWPSFNSAV) traverse the membrane as a helical segment. At 235 to 245 (SYHGDAQHRAA) the chain is on the extracellular side. Residues 246–266 (INTYCSLAACVLTTVAISSVV) form a helical membrane-spanning segment. Topologically, residues 267–271 (NKKGK) are cytoplasmic. Residues 272-292 (LEMVHIQNATLAGGVAVGTAA) form a helical membrane-spanning segment. The Extracellular portion of the chain corresponds to 293–295 (EMM). A helical membrane pass occupies residues 296–316 (LTPYGSLIVGFICGIVSTLGF). Topologically, residues 317-337 (TYCSPFLSNKLRLHDTCGIHN) are cytoplasmic. The helical transmembrane segment at 338 to 358 (LHAMPGLIGGIVGAVTAACAT) threads the bilayer. Topologically, residues 359-390 (EAVYTADGLKKMFRFEGDYATRTPSMQGGYQA) are extracellular. Residues 391–411 (AGLCVSLAFGLVGGTVVGCIL) form a helical membrane-spanning segment. Residues 412 to 467 (KLPIWGDPSDENCFDDEVYWELPEEDEEEHLGAANQYVTHLPENFKLPDRTEVAFK) are Cytoplasmic-facing.

The protein belongs to the ammonium transporter (TC 2.A.49) family. Rh subfamily. As to quaternary structure, homotrimer.

It localises to the apical cell membrane. Functionally, functions as an ammonia transporter. The sequence is that of Ammonium transporter Rh type C (rhcg) from Xenopus tropicalis (Western clawed frog).